The chain runs to 67 residues: Conotoxin Cl6.8 (67 aa).

The N-terminal stretch at 1-22 is a signal peptide; sequence MKVTAVLMVAVLVLTACQLTTA. Residues 23–39 constitute a propeptide that is removed on maturation; sequence NTTDYVRRILARKSTMS. 3 disulfides stabilise this stretch: Cys-43–Cys-58, Cys-50–Cys-62, and Cys-57–Cys-66. Position 66 is a cysteine amide (Cys-66).

This sequence belongs to the conotoxin O1 superfamily. In terms of tissue distribution, expressed by the venom duct.

It localises to the secreted. This is Conotoxin Cl6.8 from Californiconus californicus (California cone).